A 213-amino-acid chain; its full sequence is MYPHRRADMNPISEFIRGITKDNPTFGLVLGLCPTLAVTTSVENGIGMAMGTLFVLVGSNMMVSAIRKGIPGTVRLPVEIIVIATFVTIVDMVMEAFTPDLYTSLGVFIPLIVVNCIVIGRAEAYALKNGVFYSIIDALGEGTGFLLVLILIGGIRELLGTGIIDPFGMTLINLSGVINPAMFMTMSPGAFLTIAVLMTIVNYRRQQKAAKGG.

6 helical membrane passes run 25 to 45 (TFGL…VENG), 46 to 66 (IGMA…VSAI), 77 to 97 (PVEI…MEAF), 100 to 120 (DLYT…IVIG), 135 to 155 (IIDA…IGGI), and 181 to 201 (AMFM…MTIV).

Belongs to the NqrDE/RnfAE family. The Rnf complex is probably composed of eight subunits, including RnfA, RnfB, RnfC, RnfD, RnfE and RnfG.

The protein resides in the cell membrane. In terms of biological role, part of a membrane-bound complex that couples electron transfer with translocation of ions across the membrane. Catalyzes Na(+) transport, most probably coupled to electron transfer from reduced ferredoxin to methanophenazine and heterodisulfide reductase. Involved in heterodisulfide reduction during methanogenesis from acetate. This Methanosarcina acetivorans (strain ATCC 35395 / DSM 2834 / JCM 12185 / C2A) protein is Ion-translocating oxidoreductase complex subunit E.